Reading from the N-terminus, the 280-residue chain is Late embryogenesis abundant protein M17 (280 aa).

The signal sequence occupies residues 1 to 22; it reads MGNLKSLVLLALLFSFSVAVFA. Asn23 is a glycosylation site (N-linked (GlcNAc...) asparagine). Tandem repeats lie at residues 76–97 and 131–152. Residues 76 to 262 are 4 X 22 AA repeats, Cys-rich; that stretch reads GGCRWGCCGG…RGRCRYCCRS (187 aa). A disordered region spans residues 163–184; it reads VEPNDVEPQQGGRGGGGGGGGG. Positions 173–184 are enriched in gly residues; sequence GGRGGGGGGGGG. Repeat unit 3 spans residues 186–207; it reads GGCRWGCCGGWWRGRCRYCCRS. Residues 218–239 form a disordered region; sequence VEPNDVEPQQGGRGGGGGGGGG. Gly residues predominate over residues 228–239; the sequence is GGRGGGGGGGGG. Repeat unit 4 spans residues 241 to 262; the sequence is GGCRWGCCGGWWRGRCRYCCRS.

In terms of biological role, may be involved in the acquisition of desiccation tolerance during late phase of embryogenesis. The protein is Late embryogenesis abundant protein M17 of Arabidopsis thaliana (Mouse-ear cress).